The sequence spans 501 residues: Amidophosphoribosyltransferase (501 aa).

The active-site Nucleophile is the cysteine 2. The 233-residue stretch at 2–234 folds into the Glutamine amidotransferase type-2 domain; it reads CGIVGIVGKS…PGEAVYITEE (233 aa). The Mg(2+) site is built by threonine 303, aspartate 365, and aspartate 366.

In the C-terminal section; belongs to the purine/pyrimidine phosphoribosyltransferase family. It depends on Mg(2+) as a cofactor.

It carries out the reaction 5-phospho-beta-D-ribosylamine + L-glutamate + diphosphate = 5-phospho-alpha-D-ribose 1-diphosphate + L-glutamine + H2O. It functions in the pathway purine metabolism; IMP biosynthesis via de novo pathway; N(1)-(5-phospho-D-ribosyl)glycinamide from 5-phospho-alpha-D-ribose 1-diphosphate: step 1/2. In terms of biological role, catalyzes the formation of phosphoribosylamine from phosphoribosylpyrophosphate (PRPP) and glutamine. The polypeptide is Amidophosphoribosyltransferase (Pseudomonas aeruginosa (strain ATCC 15692 / DSM 22644 / CIP 104116 / JCM 14847 / LMG 12228 / 1C / PRS 101 / PAO1)).